Consider the following 1320-residue polypeptide: Poly [ADP-ribose] polymerase tankyrase-1 (1320 aa).

Over residues 1 to 15 the composition is skewed to basic residues; that stretch reads MAASRRSQHHHHHHQ. Disordered stretches follow at residues 1–88 and 111–152; these read MAAS…DGAV and AGGG…AAGV. Residues 25–46 are compositionally biased toward pro residues; it reads SAPPPPPPPPLSPGLAPGPTPA. Residues 69 to 82 are compositionally biased toward basic and acidic residues; sequence DGSRDPPDRPRSPD. The span at 120–152 shows a compositional bias: low complexity; sequence NSASSASSPTSSSSSSPSSPGSSLAESPEAAGV. ANK repeat units lie at residues 174-202, 208-237, 241-270, 274-303, 361-390, 394-423, 427-456, 514-546, 550-579, 583-612, 676-705, 709-738, 742-771, 775-803, 829-858, 862-891, 895-924, and 928-957; these read GALRELLEACRNGDVSRVKRLVDAANVNA, RKSSPLHFAAGFGRKDVVEHLLQMGANVHA, GGLIPLHNACSFGHAEVVSLLLCQGADPNA, WNYTPLHEAAIKGKIDVCIVLLQHGADPNI, RKSTPLHLAAGYNRVRIVQLLLQHGADVHA, GGLVPLHNACSYGHYEVTELLLKHGACVNA, WQFTPLHEAASKNRVEVCSLLLSHGADPTL, SHETALHCAVASLHPKRKQVAELLLRKGANVNE, DFMTPLHVAAERAHNDVMEVLHKHGAKMNA, LGQTALHRAALAGHLQTCRLLLSYGSDPSI, RHSTPLHFAAGYNRVSVVEYLLHHGADVHA, GGLVPLHNACSYGHYEVAELLVRHGASVNV, WKFTPLHEAAAKGKYEICKLLLKHGADPTK, DGNTPLDLVKEGDTDIQDLLRGDAALLDA, RNSTPLHLAAGYNNLEVAEYLLEHGADVNA, GGLIPLHNAASYGHVDIAALLIKYNTCVNA, WAFTPLHEAAQKGRTQLCALLLAHGADPTM, and EGQTPLDLATADDIRALLIDAMPPEALPTC. Residues 1019–1082 enclose the SAM domain; it reads GLDMNISQFL…IKGVERLLGG (64 aa). Residues 1105-1310 enclose the PARP catalytic domain; it reads APEDKEYQSV…YQIMKPEAPS (206 aa). Residues Cys-1227, His-1230, Cys-1235, and Cys-1238 each coordinate Zn(2+).

This sequence belongs to the ARTD/PARP family. As to quaternary structure, oligomerizes and associates with TNKS2. Interacts with the cytoplasmic domain of LNPEP/Otase in SLC2A4/GLUT4-vesicles. Binds to the N-terminus of telomeric TERF1 via the ANK repeats. Found in a complex with POT1; TERF1 and TINF2. Interacts with AXIN1. Interacts with AXIN2. Interacts with BLZF1 and CASC3. Interacts with NUMA1. In terms of processing, phosphorylated on serine residues by MAPK kinases upon insulin stimulation. Phosphorylated during mitosis. Post-translationally, ubiquitinated by RNF146 when auto-poly-ADP-ribosylated, leading to its degradation. ADP-ribosylated (-auto). Poly-ADP-ribosylated protein is recognized by RNF146, followed by ubiquitination.

It localises to the cytoplasm. It is found in the golgi apparatus membrane. Its subcellular location is the cytoskeleton. The protein localises to the microtubule organizing center. The protein resides in the centrosome. It localises to the nucleus. It is found in the nuclear pore complex. Its subcellular location is the chromosome. The protein localises to the telomere. The protein resides in the spindle pole. It catalyses the reaction NAD(+) + (ADP-D-ribosyl)n-acceptor = nicotinamide + (ADP-D-ribosyl)n+1-acceptor + H(+).. The enzyme catalyses L-aspartyl-[protein] + NAD(+) = 4-O-(ADP-D-ribosyl)-L-aspartyl-[protein] + nicotinamide. The catalysed reaction is L-glutamyl-[protein] + NAD(+) = 5-O-(ADP-D-ribosyl)-L-glutamyl-[protein] + nicotinamide. Its function is as follows. Poly-ADP-ribosyltransferase involved in various processes such as Wnt signaling pathway, telomere length and vesicle trafficking. Acts as an activator of the Wnt signaling pathway by mediating poly-ADP-ribosylation (PARsylation) of AXIN1 and AXIN2, 2 key components of the beta-catenin destruction complex: poly-ADP-ribosylated target proteins are recognized by RNF146, which mediates their ubiquitination and subsequent degradation. Also mediates PARsylation of BLZF1 and CASC3, followed by recruitment of RNF146 and subsequent ubiquitination. Mediates PARsylation of TERF1, thereby contributing to the regulation of telomere length. Involved in centrosome maturation during prometaphase by mediating PARsylation of HEPACAM2/MIKI. May also regulate vesicle trafficking and modulate the subcellular distribution of SLC2A4/GLUT4-vesicles. May be involved in spindle pole assembly through PARsylation of NUMA1. Stimulates 26S proteasome activity. This is Poly [ADP-ribose] polymerase tankyrase-1 (Tnks) from Mus musculus (Mouse).